A 1025-amino-acid polypeptide reads, in one-letter code: Error-prone DNA polymerase (1025 aa).

The protein belongs to the DNA polymerase type-C family. DnaE2 subfamily.

Its subcellular location is the cytoplasm. The catalysed reaction is DNA(n) + a 2'-deoxyribonucleoside 5'-triphosphate = DNA(n+1) + diphosphate. DNA polymerase involved in damage-induced mutagenesis and translesion synthesis (TLS). It is not the major replicative DNA polymerase. The protein is Error-prone DNA polymerase of Pseudomonas fluorescens (strain Pf0-1).